The chain runs to 219 residues: MESTEKLTDTNAILAYLYETFPLCFVAEGETKPLKIGLFQDLAERLADDSKVSKTQLRVALRRYTSSWRYLKCIKAGAVRVDLDGNPCGELEQEHIDHAQATLKESQDKAKAKRAERSKDEGDAADKAPRKPKRKPQPQARRDAKPAAKDKPKAAPKAPAVPINLVPAKLEELKVAQRVNVKLGMSPVAGSIVDINKGDVHVQLDSGLTVKVRAEYILL.

Residues threonine 102–alanine 160 are disordered. 2 stretches are compositionally biased toward basic and acidic residues: residues glutamate 105 to proline 129 and alanine 140 to lysine 153.

This sequence belongs to the ProQ family.

It localises to the cytoplasm. Its function is as follows. RNA chaperone with significant RNA binding, RNA strand exchange and RNA duplexing activities. This Shewanella amazonensis (strain ATCC BAA-1098 / SB2B) protein is RNA chaperone ProQ.